The primary structure comprises 187 residues: Large ribosomal subunit protein uL22 (187 aa).

The disordered stretch occupies residues 155–187 (DAVSRAAPTDDAPAKKKLSKKKLARQKEKMMRE). The segment covering 169–178 (KKKLSKKKLA) has biased composition (basic residues).

It belongs to the universal ribosomal protein uL22 family.

The chain is Large ribosomal subunit protein uL22 (RpL17) from Lonomia obliqua (Moth).